Reading from the N-terminus, the 218-residue chain is Response regulator UvrY (218 aa).

The region spanning 3–119 (NVLLVDDHEL…EVVSAIRSVY (117 aa)) is the Response regulatory domain. Position 54 is a 4-aspartylphosphate (aspartate 54). The region spanning 143–208 (TESPFASLSE…ELTHLAIRHG (66 aa)) is the HTH luxR-type domain. A DNA-binding region (H-T-H motif) is located at residues 167 to 186 (VNEISEQLNLSPKTVNSYRY).

In terms of processing, phosphorylated and activated by BarA.

The protein localises to the cytoplasm. In terms of biological role, member of the two-component regulatory system UvrY/BarA involved in the regulation of carbon metabolism via the CsrA/CsrB regulatory system. UvrY activates the transcription of the untranslated csrB RNA and of barA, in an autoregulatory loop. Mediates the effects of CsrA on csrB RNA by BarA-dependent and BarA-independent mechanisms. The chain is Response regulator UvrY (uvrY) from Escherichia coli (strain K12).